The primary structure comprises 504 residues: Maturase K (504 aa).

The protein belongs to the intron maturase 2 family. MatK subfamily.

The protein localises to the plastid. Its subcellular location is the chloroplast. In terms of biological role, usually encoded in the trnK tRNA gene intron. Probably assists in splicing its own and other chloroplast group II introns. The protein is Maturase K of Erythrina crista-galli (Cockspur coral tree).